Here is a 417-residue protein sequence, read N- to C-terminus: Actin-related protein 10 (417 aa).

This sequence belongs to the actin family. As to quaternary structure, subunit of dynactin, a multiprotein complex part of a tripartite complex with dynein and a adapter, such as BICDL1, BICD2 or HOOK3. The dynactin complex is built around ACTR1A/ACTB filament and consists of an actin-related filament composed of a shoulder domain, a pointed end and a barbed end. Its length is defined by its flexible shoulder domain. The soulder is composed of 2 DCTN1 subunits, 4 DCTN2 and 2 DCTN3. The 4 DCNT2 (via N-terminus) bind the ACTR1A filament and act as molecular rulers to determine the length. The pointed end is important for binding dynein-dynactin cargo adapters. Consists of 4 subunits: ACTR10, DCNT4, DCTN5 and DCTN6. The barbed end is composed of a CAPZA1:CAPZB heterodimers, which binds ACTR1A/ACTB filament and dynactin and stabilizes dynactin.

The protein localises to the cytoplasm. It is found in the cytoskeleton. In terms of biological role, part of the dynactin complex that activates the molecular motor dynein for ultra-processive transport along microtubules. The chain is Actin-related protein 10 (Actr10) from Mus musculus (Mouse).